The following is a 408-amino-acid chain: Ribosomal RNA large subunit methyltransferase DR_0049 (408 aa).

Belongs to the methyltransferase superfamily.

The enzyme catalyses cytidine(2499) in 23S rRNA + S-adenosyl-L-methionine = 5-methylcytidine(2499) in 23S rRNA + S-adenosyl-L-homocysteine + H(+). Its function is as follows. Specifically methylates the cytosine at position 2499 (m5C2499) of 23S rRNA. The protein is Ribosomal RNA large subunit methyltransferase DR_0049 of Deinococcus radiodurans (strain ATCC 13939 / DSM 20539 / JCM 16871 / CCUG 27074 / LMG 4051 / NBRC 15346 / NCIMB 9279 / VKM B-1422 / R1).